A 604-amino-acid chain; its full sequence is Elongation factor 4 1 (604 aa).

The region spanning 10-191 (EHIRNFCIIA…AIVDSVPAPT (182 aa)) is the tr-type G domain. GTP contacts are provided by residues 22–27 (DHGKST) and 138–141 (NKID).

Belongs to the TRAFAC class translation factor GTPase superfamily. Classic translation factor GTPase family. LepA subfamily.

It localises to the cell inner membrane. It carries out the reaction GTP + H2O = GDP + phosphate + H(+). Required for accurate and efficient protein synthesis under certain stress conditions. May act as a fidelity factor of the translation reaction, by catalyzing a one-codon backward translocation of tRNAs on improperly translocated ribosomes. Back-translocation proceeds from a post-translocation (POST) complex to a pre-translocation (PRE) complex, thus giving elongation factor G a second chance to translocate the tRNAs correctly. Binds to ribosomes in a GTP-dependent manner. This chain is Elongation factor 4 1, found in Rhodopirellula baltica (strain DSM 10527 / NCIMB 13988 / SH1).